Here is a 113-residue protein sequence, read N- to C-terminus: Hydrogenase maturation factor HypA (113 aa).

Ni(2+) is bound at residue H2. Residues C73, C76, C89, and C92 each coordinate Zn(2+).

Belongs to the HypA/HybF family.

Functionally, involved in the maturation of [NiFe] hydrogenases. Required for nickel insertion into the metal center of the hydrogenase. The polypeptide is Hydrogenase maturation factor HypA (Azotobacter vinelandii).